We begin with the raw amino-acid sequence, 89 residues long: Small ribosomal subunit protein bS20 (89 aa).

The disordered stretch occupies residues 1-26; sequence MANSAQARKRARQADGQRSHNASLRS.

Belongs to the bacterial ribosomal protein bS20 family.

Functionally, binds directly to 16S ribosomal RNA. This chain is Small ribosomal subunit protein bS20, found in Dechloromonas aromatica (strain RCB).